The sequence spans 26 residues: Photosystem II stability/assembly factor HCF136, chloroplastic (26 aa).

This sequence belongs to the Ycf48 family.

Its subcellular location is the plastid. It localises to the chloroplast thylakoid lumen. Essential for photosystem II (PSII) biogenesis; required for assembly of an early intermediate in PSII assembly that includes D2 (psbD) and cytochrome b559. The polypeptide is Photosystem II stability/assembly factor HCF136, chloroplastic (Populus euphratica (Euphrates poplar)).